A 707-amino-acid chain; its full sequence is Acyl-CoA ligase 891, peroxisomal (707 aa).

259–270 (INYTSGTTGPPK) is a binding site for ATP. Residues 525 to 549 (DGWFRTGDVCTVDAQGRFIIIDRRK) are fatty acid-binding. Residues 705–707 (AKL) carry the Peroxisome targeting signal motif.

The protein belongs to the ATP-dependent AMP-binding enzyme family.

The protein localises to the peroxisome matrix. The catalysed reaction is (4E,8E)-10-(4-hydroxy-6-methoxy-7-methyl-3-oxo-1,3-dihydro-2-benzofuran-5-yl)-4,8-dimethyldeca-4,8-dienoate + ATP + CoA = (4E,8E)-10-(4-hydroxy-6-methoxy-7-methyl-3-oxo-1,3-dihydro-2-benzofuran-5-yl)-4,8-dimethyldeca-4,8-dienoyl-CoA + AMP + diphosphate. The protein operates within secondary metabolite biosynthesis; terpenoid biosynthesis. In terms of biological role, acyl-CoA ligase involved in the biosynthesis of mycophenolic acid (MPA), the first isolated antibiotic natural product in the world obtained from a culture of Penicillium brevicompactum in 1893. The peroxisomal acyl-CoA ligase 891 converts the intermediate MFDHMP-3C into MFDHMP-3C-CoA which impairs its diffusion from the peroxisome. The first step of the pathway is the synthesis of 5-methylorsellinic acid (5MOA) by the cytosolic polyketide synthase mpaC. 5MOA is then converted to the phthalide compound 5,7-dihydroxy-4,6-dimethylphthalide (DHMP) by the endoplasmic reticulum-bound cytochrome P450 monooxygenase mpaDE. MpaDE first catalyzes hydroxylation of 5-MOA to 4,6-dihydroxy-2-(hydroxymethyl)-3-methylbenzoic acid (DHMB). MpaDE then acts as a lactone synthase that catalyzes the ring closure to convert DHMB into DHMP. The next step is the prenylation of DHMP by the Golgi apparatus-associated prenyltransferase mpaA to yield farnesyl-DHMP (FDHMP). The ER-bound oxygenase mpaB then mediates the oxidative cleavage the C19-C20 double bond in FDHMP to yield FDHMP-3C via a mycophenolic aldehyde intermediate. The O-methyltransferase mpaG catalyzes the methylation of FDHMP-3C to yield MFDHMP-3C. After the cytosolic methylation of FDHMP-3C, MFDHMP-3C enters into peroxisomes probably via free diffusion due to its low molecular weight. Upon a peroxisomal CoA ligation reaction, catalyzed by a beta-oxidation component enzyme acyl-CoA ligase ACL891, MFDHMP-3C-CoA would then be restricted to peroxisomes for the following beta-oxidation pathway steps. The peroxisomal beta-oxidation machinery than converts MFDHMP-3C-CoA into MPA_CoA, via a beta-oxidation chain-shortening process. Finally mpaH acts as a peroxisomal acyl-CoA hydrolase with high substrate specificity toward MPA-CoA to release the final product MPA. The polypeptide is Acyl-CoA ligase 891, peroxisomal (Penicillium brevicompactum).